We begin with the raw amino-acid sequence, 122 residues long: MIQPQTHLNVADNSGARELMCIRIIGASNRRYAHIGDVIVAVIKEAVPNTPLERSEVIRAVIVRTCKELRRDNGMIIRYDDNAAVVIDHEGNPKGTRVFGAIARELRQLNFTKIVSLAPEVL.

This sequence belongs to the universal ribosomal protein uL14 family. In terms of assembly, part of the 50S ribosomal subunit.

The protein localises to the plastid. It is found in the chloroplast. Its function is as follows. Binds to 23S rRNA. In Citrus sinensis (Sweet orange), this protein is Large ribosomal subunit protein uL14c.